A 790-amino-acid chain; its full sequence is Cadherin-18 (790 aa).

An N-terminal signal peptide occupies residues 1–24; that stretch reads MKITSTSCICPVLVCLCFVQRCYG. Positions 25 to 53 are excised as a propeptide; sequence TTHHGSIRGTRNQTKHIEGETEVHHRPKR. A glycan (N-linked (GlcNAc...) asparagine) is linked at N36. Cadherin domains follow at residues 54-159, 160-268, 269-383, 384-486, and 487-608; these read GWVW…APKF, TDGP…PPRF, PQKH…PPLF, SMPS…DNPP, and ELAR…FLSS. The Extracellular portion of the chain corresponds to 54 to 608; the sequence is GWVWNQFFVL…TCHAEAFLSS (555 aa). N255 carries an N-linked (GlcNAc...) asparagine glycan. N-linked (GlcNAc...) asparagine glycans are attached at residues N455 and N536. The chain crosses the membrane as a helical span at residues 609-636; the sequence is AGLSTGALIAILLCVVILLAIVVLFITL. Topologically, residues 637 to 790 are cytoplasmic; sequence RRSKKEPLII…YGEIESERTT (154 aa). S786 is modified (phosphoserine).

The protein localises to the cell membrane. Cadherins are calcium-dependent cell adhesion proteins. They preferentially interact with themselves in a homophilic manner in connecting cells; cadherins may thus contribute to the sorting of heterogeneous cell types. In Bos taurus (Bovine), this protein is Cadherin-18 (CDH18).